The primary structure comprises 512 residues: Maturase K (512 aa).

It belongs to the intron maturase 2 family. MatK subfamily.

The protein localises to the plastid. Its subcellular location is the chloroplast. Its function is as follows. Usually encoded in the trnK tRNA gene intron. Probably assists in splicing its own and other chloroplast group II introns. This is Maturase K from Erythranthe guttata (Yellow monkey flower).